A 355-amino-acid chain; its full sequence is tRNA (guanine-N(1)-)-methyltransferase (355 aa).

S-adenosyl-L-methionine is bound by residues G109 and 129–134 (IGDYVL).

This sequence belongs to the RNA methyltransferase TrmD family. Homodimer.

It localises to the cytoplasm. It catalyses the reaction guanosine(37) in tRNA + S-adenosyl-L-methionine = N(1)-methylguanosine(37) in tRNA + S-adenosyl-L-homocysteine + H(+). In terms of biological role, specifically methylates guanosine-37 in various tRNAs. This Chlamydia abortus (strain DSM 27085 / S26/3) (Chlamydophila abortus) protein is tRNA (guanine-N(1)-)-methyltransferase.